We begin with the raw amino-acid sequence, 303 residues long: Di/tripeptide transport system permease protein DppC (303 aa).

7 helical membrane passes run 33–53, 103–123, 131–151, 152–172, 202–222, 225–245, and 267–287; these read ALGG…APWV, LLIG…LGLL, AGPL…LLLA, VAIV…IAIV, AGTL…PLIV, TLSF…GLGV, and WWVV…INLM. One can recognise an ABC transmembrane type-1 domain in the interval 99–288; that stretch reads ARLSLLIGLS…LSVLAINLMG (190 aa).

Belongs to the binding-protein-dependent transport system permease family. OppBC subfamily. In terms of assembly, the complex is composed of two ATP-binding proteins (DppD and DppF), two transmembrane proteins (DppB and DppC) and a solute-binding protein (DppA1-A5). Five orthologous SBPs (DppA1-A5) are present in P.aeruginosa, which increases the substrate specificity of the DppBCDF transporter.

It is found in the cell inner membrane. In terms of biological role, part of the ABC transporter DppABCDF involved in the uptake of various di/tripeptides. Is also involved in the uptake of phaseolotoxin, a toxic tripeptide inhibiting the enzyme ornithine carbamoyltransferase. Responsible for the translocation of the substrate across the membrane. The sequence is that of Di/tripeptide transport system permease protein DppC from Pseudomonas aeruginosa (strain UCBPP-PA14).